Here is a 201-residue protein sequence, read N- to C-terminus: Myosin regulatory light chain 2 (201 aa).

Residues 1 to 48 (MADKDKKVKKKKAKEDAPAEEAPAAAAPAGDRQSSRGSRKAKRTGSNV) are disordered. Low complexity predominate over residues 20-29 (EEAPAAAAPA). Ser46 bears the Phosphoserine mark. EF-hand domains follow at residues 55 to 90 (KQVA…LGRL), 125 to 158 (DEDD…WGDK), and 159 to 194 (FSAD…SAEE). Residues Asp68, Asp70, Asp72, and Asp79 each contribute to the Ca(2+) site.

As to quaternary structure, myosin is a hexamer of 2 heavy chains and 4 light chains.

The chain is Myosin regulatory light chain 2 from Bombyx mori (Silk moth).